The primary structure comprises 391 residues: Ferrochelatase (391 aa).

Fe cation contacts are provided by His196 and Glu281.

This sequence belongs to the ferrochelatase family.

The protein resides in the cytoplasm. The enzyme catalyses heme b + 2 H(+) = protoporphyrin IX + Fe(2+). Its pathway is porphyrin-containing compound metabolism; protoheme biosynthesis; protoheme from protoporphyrin-IX: step 1/1. Functionally, catalyzes the ferrous insertion into protoporphyrin IX. This Synechococcus sp. (strain CC9605) protein is Ferrochelatase.